A 144-amino-acid chain; its full sequence is D-aminoacyl-tRNA deacylase (144 aa).

A Gly-cisPro motif, important for rejection of L-amino acids motif is present at residues 136 to 137 (GP).

This sequence belongs to the DTD family. As to quaternary structure, homodimer.

The protein resides in the cytoplasm. The catalysed reaction is glycyl-tRNA(Ala) + H2O = tRNA(Ala) + glycine + H(+). It carries out the reaction a D-aminoacyl-tRNA + H2O = a tRNA + a D-alpha-amino acid + H(+). Functionally, an aminoacyl-tRNA editing enzyme that deacylates mischarged D-aminoacyl-tRNAs. Also deacylates mischarged glycyl-tRNA(Ala), protecting cells against glycine mischarging by AlaRS. Acts via tRNA-based rather than protein-based catalysis; rejects L-amino acids rather than detecting D-amino acids in the active site. By recycling D-aminoacyl-tRNA to D-amino acids and free tRNA molecules, this enzyme counteracts the toxicity associated with the formation of D-aminoacyl-tRNA entities in vivo and helps enforce protein L-homochirality. This chain is D-aminoacyl-tRNA deacylase, found in Haemophilus influenzae (strain ATCC 51907 / DSM 11121 / KW20 / Rd).